Consider the following 1151-residue polypeptide: Calcium-activated potassium channel subunit alpha-1 (1151 aa).

Residues Met-1–Glu-36 are disordered. The Extracellular portion of the chain corresponds to Met-1–Met-59. Residues Ser-15–Ser-33 are compositionally biased toward low complexity. Residues Trp-60–Leu-80 form a helical membrane-spanning segment. The Cytoplasmic segment spans residues Trp-81–Arg-151. Residues Cys-91, Cys-92, and Cys-94 are each lipidated (S-palmitoyl cysteine). Residues Val-152–Ser-172 traverse the membrane as a helical segment. The Extracellular segment spans residues Ser-173 to Thr-187. A helical transmembrane segment spans residues Leu-188–Ala-208. The Cytoplasmic segment spans residues Ala-209 to Lys-212. Residues Leu-213 to Val-233 form a helical membrane-spanning segment. Over Ser-234–Leu-237 the chain is Extracellular. A helical; Voltage-sensor transmembrane segment spans residues Asn-238–Ile-258. The Cytoplasmic portion of the chain corresponds to Leu-259–Leu-273. Residues Val-274–Val-294 traverse the membrane as a helical segment. Residues Glu-295–Gln-308 are Extracellular-facing. Residues Ala-309–Val-331 constitute an intramembrane region (pore-forming). The Selectivity for potassium signature appears at Thr-325 to Tyr-328. Residues Tyr-332–Leu-340 are Extracellular-facing. A helical transmembrane segment spans residues Phe-341–Ile-361. At Glu-362–Leu-1151 the chain is on the cytoplasmic side. The 143-residue stretch at Arg-380 to Ile-522 folds into the RCK N-terminal 1 domain. Mg(2+) is bound by residues Glu-412, Gln-435, and Glu-437. Residues Leu-529–Phe-549 are segment S7. The segment S8 stretch occupies residues Leu-586–Ile-606. A heme-binding motif region spans residues Cys-650 to His-654. Residues Glu-674–Arg-702 are disordered. Thr-678 is subject to Phosphothreonine. 3 positions are modified to phosphoserine: Ser-680, Ser-693, and Ser-697. Residues Val-752 to Leu-772 form a segment S9 region. The RCK N-terminal 2 domain occupies Ser-754–Pro-898. At Thr-885 the chain carries Phosphothreonine. Phosphoserine occurs at positions 893 and 897. Positions Thr-918–Glu-940 match the Calcium bowl motif. Residues Gln-927, Asp-930, Asp-933, and Asp-935 each contribute to the Ca(2+) site. The segment at Phe-947 to Phe-967 is segment S10. A compositionally biased stretch (low complexity) spans Arg-1101–Ser-1126. A disordered region spans residues Arg-1101–Leu-1151. The span at Lys-1135 to Leu-1151 shows a compositional bias: basic and acidic residues. Residues Ser-1136 and Ser-1139 each carry the phosphoserine modification.

Belongs to the potassium channel family. Calcium-activated (TC 1.A.1.3) subfamily. KCa1.1/KCNMA1 sub-subfamily. In terms of assembly, homotetramer; which constitutes the calcium-activated potassium channel. Interacts with beta subunits KCNMB1, KCNMB2, KCNMB3 and KCNMB4. Interacts with gamma subunits LRRC26, LRRC38, LRRC52 and LRRC55. Beta and gamma subunits are accessory, and modulate its activity. Interacts with RAB11B. Phosphorylated. Phosphorylation by kinases such as PKA and/or PKG. In smooth muscles, phosphorylation affects its activity. Post-translationally, palmitoylation by ZDHHC22 and ZDHHC23 within the intracellular linker between the S0 and S1 transmembrane domains regulates localization to the plasma membrane. Depalmitoylated by LYPLA1 and LYPLAL1, leading to retard exit from the trans-Golgi network.

Its subcellular location is the cell membrane. It carries out the reaction K(+)(in) = K(+)(out). With respect to regulation, ethanol and carbon monoxide-bound heme increase channel activation. Heme inhibits channel activation. In terms of biological role, potassium channel activated by both membrane depolarization or increase in cytosolic Ca(2+) that mediates export of K(+). It is also activated by the concentration of cytosolic Mg(2+). Its activation dampens the excitatory events that elevate the cytosolic Ca(2+) concentration and/or depolarize the cell membrane. It therefore contributes to repolarization of the membrane potential. Plays a key role in controlling excitability in a number of systems, such as regulation of the contraction of smooth muscle, the tuning of hair cells in the cochlea, regulation of transmitter release, and innate immunity. In smooth muscles, its activation by high level of Ca(2+), caused by ryanodine receptors in the sarcoplasmic reticulum, regulates the membrane potential. In cochlea cells, its number and kinetic properties partly determine the characteristic frequency of each hair cell and thereby helps to establish a tonotopic map. Kinetics of KCNMA1 channels are determined by alternative splicing, phosphorylation status and its combination with modulating beta subunits. Highly sensitive to both iberiotoxin (IbTx) and charybdotoxin (CTX). This Macaca mulatta (Rhesus macaque) protein is Calcium-activated potassium channel subunit alpha-1 (KCNMA1).